Reading from the N-terminus, the 1536-residue chain is Glycogen debranching enzyme (1536 aa).

Catalysis depends on residues aspartate 535, histidine 538, and aspartate 670.

It belongs to the glycogen debranching enzyme family. Interacts with IGD1.

The protein localises to the mitochondrion. It is found in the cytoplasm. The enzyme catalyses Transfers a segment of a (1-&gt;4)-alpha-D-glucan to a new position in an acceptor, which may be glucose or a (1-&gt;4)-alpha-D-glucan.. The catalysed reaction is Hydrolysis of (1-&gt;6)-alpha-D-glucosidic branch linkages in glycogen phosphorylase limit dextrin.. Activity is inhibited by IGD1. Its function is as follows. Multifunctional enzyme acting as 1,4-alpha-D-glucan:1,4-alpha-D-glucan 4-alpha-D-glycosyltransferase and amylo-1,6-glucosidase in glycogen degradation. This chain is Glycogen debranching enzyme (GDB1), found in Saccharomyces cerevisiae (strain ATCC 204508 / S288c) (Baker's yeast).